Consider the following 311-residue polypeptide: Phosphopantothenate--cysteine ligase (311 aa).

Alanine 2 is subject to N-acetylalanine.

This sequence belongs to the PPC synthetase family. Homodimer.

It carries out the reaction (R)-4'-phosphopantothenate + L-cysteine + ATP = N-[(R)-4-phosphopantothenoyl]-L-cysteine + AMP + diphosphate + H(+). The catalysed reaction is (R)-4'-phosphopantothenate + L-cysteine + CTP = N-[(R)-4-phosphopantothenoyl]-L-cysteine + CMP + diphosphate + H(+). Its pathway is cofactor biosynthesis; coenzyme A biosynthesis; CoA from (R)-pantothenate: step 2/5. In terms of biological role, catalyzes the second step in the biosynthesis of coenzyme A from vitamin B5, where cysteine is conjugated to 4'-phosphopantothenate to form 4-phosphopantothenoylcysteine. Has a preference for ATP over CTP as a cosubstrate. The protein is Phosphopantothenate--cysteine ligase (Ppcs) of Mus musculus (Mouse).